The sequence spans 224 residues: N-(5'-phosphoribosyl)anthranilate isomerase (224 aa).

This sequence belongs to the TrpF family.

The enzyme catalyses N-(5-phospho-beta-D-ribosyl)anthranilate = 1-(2-carboxyphenylamino)-1-deoxy-D-ribulose 5-phosphate. The protein operates within amino-acid biosynthesis; L-tryptophan biosynthesis; L-tryptophan from chorismate: step 3/5. This Allorhizobium ampelinum (strain ATCC BAA-846 / DSM 112012 / S4) (Agrobacterium vitis (strain S4)) protein is N-(5'-phosphoribosyl)anthranilate isomerase.